A 229-amino-acid polypeptide reads, in one-letter code: MNNIAPVITIDGPSGSGKGTVAGILAKRLGWNLLDSGALYRLLAFAAHNHGVDLTNEELLKKLAAHLDVQFIAATDGQLQRIILEGDEVSDVIRTESVGSGASQVAALPAVREALLQRQRAFQEAPGLVADGRDMGTVVFPNAPLKIFLTASAEERARRRYLQLKGKVEGVSLSSLLDEIRARDERDTQRAVAPLKPAADAIQLDSTELSIDQVLERIMSEIAIRDIAG.

12–20 contacts ATP; the sequence is GPSGSGKGT.

It belongs to the cytidylate kinase family. Type 1 subfamily.

The protein resides in the cytoplasm. It carries out the reaction CMP + ATP = CDP + ADP. The catalysed reaction is dCMP + ATP = dCDP + ADP. The polypeptide is Cytidylate kinase (Pseudomonas fluorescens (strain Pf0-1)).